The sequence spans 270 residues: Glucosamine-6-phosphate deaminase (270 aa).

Residue Asp68 is the Proton acceptor; for enolization step of the active site. Asp145 (for ring-opening step) is an active-site residue. The active-site Proton acceptor; for ring-opening step is the His147. Glu152 serves as the catalytic For ring-opening step.

Belongs to the glucosamine/galactosamine-6-phosphate isomerase family. NagB subfamily.

It carries out the reaction alpha-D-glucosamine 6-phosphate + H2O = beta-D-fructose 6-phosphate + NH4(+). It functions in the pathway amino-sugar metabolism; N-acetylneuraminate degradation; D-fructose 6-phosphate from N-acetylneuraminate: step 5/5. In terms of biological role, catalyzes the reversible isomerization-deamination of glucosamine 6-phosphate (GlcN6P) to form fructose 6-phosphate (Fru6P) and ammonium ion. The chain is Glucosamine-6-phosphate deaminase from Bifidobacterium longum subsp. infantis (strain ATCC 15697 / DSM 20088 / JCM 1222 / NCTC 11817 / S12).